A 60-amino-acid chain; its full sequence is Large ribosomal subunit protein uL30 (60 aa).

It belongs to the universal ribosomal protein uL30 family. As to quaternary structure, part of the 50S ribosomal subunit.

This chain is Large ribosomal subunit protein uL30, found in Bacillus cereus (strain G9842).